A 295-amino-acid polypeptide reads, in one-letter code: Shikimate dehydrogenase (NADP(+)) (295 aa).

Shikimate-binding positions include 24–26 (SRS) and T71. The Proton acceptor role is filled by K75. Residue E87 participates in NADP(+) binding. Positions 96 and 111 each coordinate shikimate. NADP(+)-binding positions include 136–140 (GAGGA), 160–165 (NRTASR), and M233. Y235 is a binding site for shikimate. G256 contributes to the NADP(+) binding site.

The protein belongs to the shikimate dehydrogenase family. Homodimer.

It carries out the reaction shikimate + NADP(+) = 3-dehydroshikimate + NADPH + H(+). The protein operates within metabolic intermediate biosynthesis; chorismate biosynthesis; chorismate from D-erythrose 4-phosphate and phosphoenolpyruvate: step 4/7. Functionally, involved in the biosynthesis of the chorismate, which leads to the biosynthesis of aromatic amino acids. Catalyzes the reversible NADPH linked reduction of 3-dehydroshikimate (DHSA) to yield shikimate (SA). This is Shikimate dehydrogenase (NADP(+)) from Cupriavidus taiwanensis (strain DSM 17343 / BCRC 17206 / CCUG 44338 / CIP 107171 / LMG 19424 / R1) (Ralstonia taiwanensis (strain LMG 19424)).